Reading from the N-terminus, the 552-residue chain is Urocanate hydratase (552 aa).

NAD(+) is bound by residues 49–50 (GG), Gln-127, 173–175 (GMG), Asp-193, 239–240 (NA), 260–264 (QTSAH), 270–271 (YI), and Tyr-319. The active site involves Cys-407. NAD(+) is bound at residue Gly-489.

It belongs to the urocanase family. NAD(+) is required as a cofactor.

The protein resides in the cytoplasm. The enzyme catalyses 4-imidazolone-5-propanoate = trans-urocanate + H2O. It participates in amino-acid degradation; L-histidine degradation into L-glutamate; N-formimidoyl-L-glutamate from L-histidine: step 2/3. Functionally, catalyzes the conversion of urocanate to 4-imidazolone-5-propionate. This is Urocanate hydratase from Bacillus cereus (strain AH187).